A 702-amino-acid chain; its full sequence is MADS-box MEF2 type transcription factor MIG1 (702 aa).

An MADS-box domain is found at 1–61 (MGRRKIEIKA…KKLYEYSSGD (61 aa)). Disordered stretches follow at residues 73-608 (GGAT…NIDT) and 658-702 (PSFL…KVDS). The span at 86-96 (GGDDDDEEEGD) shows a compositional bias: acidic residues. The segment covering 132–144 (ASPPIPNGVPFPP) has biased composition (pro residues). Over residues 145 to 155 (HGHGVPRGHTP) the composition is skewed to low complexity. Residues 180 to 195 (GSPQVNGFGFGQQQSM) are compositionally biased toward polar residues. The segment covering 201 to 241 (TTMPPHMPPQMAPGPPFPYPQHPQHPPHPPHPPHPPHPQQP) has biased composition (pro residues). Composition is skewed to low complexity over residues 273 to 284 (PMGMQRHSVSPP), 326 to 343 (ESPQQIEPPQHQHQQQPE), and 350 to 371 (EQQQQQQQSQQSQQPQEPQSEP). A compositionally biased stretch (polar residues) spans 456-465 (VDESTSNASE). Composition is skewed to low complexity over residues 487–512 (RASISSVSSAPESAPAPPSRSNSLRA) and 530–553 (DGSGSATAESASSAQGGASTDATS). Polar residues predominate over residues 554-567 (QSTRQNDSHSSTNM). Residues 587-600 (PPNPFAPKRPPQHP) show a composition bias toward pro residues. Residues 693–702 (NEPKRVKVDS) are compositionally biased toward basic and acidic residues.

It belongs to the MEF2 family. As to quaternary structure, interacts with MAPK MPS1.

It is found in the nucleus. Transcription factor acting downstream of the MPS1 MAP kinase (MAPK) cascade during conidiation and plant infection. Required for overcoming plant defense responses and the differentiation of secondary infectious hyphae in live plant cells. The protein is MADS-box MEF2 type transcription factor MIG1 of Pyricularia oryzae (Rice blast fungus).